Consider the following 55-residue polypeptide: Bowman-Birk type proteinase inhibitor B1 (55 aa).

Cystine bridges form between Cys6/Cys53, Cys12/Cys17, Cys26/Cys33, and Cys30/Cys45.

This sequence belongs to the Bowman-Birk serine protease inhibitor family. Expressed in bulb (at protein level).

In terms of biological role, serine protease inhibitor. Weakly inhibits trypsin (Ki = 167 nM). Does not inhibit bacterial subtilisin or mamallian chymotrypsin. This Hyacinthus orientalis (Common hyacinth) protein is Bowman-Birk type proteinase inhibitor B1.